Here is a 122-residue protein sequence, read N- to C-terminus: Large ribosomal subunit protein uL14 (122 aa).

The protein belongs to the universal ribosomal protein uL14 family. In terms of assembly, part of the 50S ribosomal subunit. Forms a cluster with proteins L3 and L19. In the 70S ribosome, L14 and L19 interact and together make contacts with the 16S rRNA in bridges B5 and B8.

Binds to 23S rRNA. Forms part of two intersubunit bridges in the 70S ribosome. This chain is Large ribosomal subunit protein uL14, found in Nitrosospira multiformis (strain ATCC 25196 / NCIMB 11849 / C 71).